A 140-amino-acid chain; its full sequence is Nucleoside diphosphate kinase (140 aa).

ATP is bound by residues lysine 11, phenylalanine 59, arginine 87, threonine 93, arginine 104, and asparagine 114. Histidine 117 (pros-phosphohistidine intermediate) is an active-site residue.

It belongs to the NDK family. Homotetramer. Mg(2+) serves as cofactor.

The protein resides in the cytoplasm. It catalyses the reaction a 2'-deoxyribonucleoside 5'-diphosphate + ATP = a 2'-deoxyribonucleoside 5'-triphosphate + ADP. It carries out the reaction a ribonucleoside 5'-diphosphate + ATP = a ribonucleoside 5'-triphosphate + ADP. Major role in the synthesis of nucleoside triphosphates other than ATP. The ATP gamma phosphate is transferred to the NDP beta phosphate via a ping-pong mechanism, using a phosphorylated active-site intermediate. The sequence is that of Nucleoside diphosphate kinase from Rhodopseudomonas palustris (strain BisA53).